Consider the following 97-residue polypeptide: Mapk-regulated corepressor-interacting protein 1 (97 aa).

Disordered stretches follow at residues 1–29 and 72–97; these read MTSSPVSRVVYNGKRPASNTRSPSSNEIF and SNSLKSFKPIDLNDLKRRTVQDPKKS. Polar residues predominate over residues 17-28; the sequence is ASNTRSPSSNEI. Basic and acidic residues predominate over residues 82–97; the sequence is DLNDLKRRTVQDPKKS.

Belongs to the MCRIP family.

The protein resides in the nucleus. It is found in the cytoplasm. The protein localises to the stress granule. Its function is as follows. May play a role in the regulation of the epithelial-mesenchymal transition. The protein is Mapk-regulated corepressor-interacting protein 1 (Mcrip1) of Xenopus tropicalis (Western clawed frog).